Reading from the N-terminus, the 402-residue chain is MNSNNKRVALQEISNYVSKSLNVKGWVNAQVREISLQNGCSPSDKHFPSQSWHGISSIEESQIQKDYDSFLASPLEEEIVFTEKQLLVDLDVCSISNVQSPNCSVSEFGIAIEESNDNCAEEDEEEELQMRYSADESVSVEYAKEILSHMEKLEIRFMPDYRHMSAQPYYVTEMRASVINWIVGVHTCINLLPESLFLSINVLDRFLSLQNVPASKMKLCGATALFIACKYEEIHPPTVKDLEIVLEGEWIGEDICGMEKYMLMVLQYQLGWPGPVSFLRLLTIVNKWESQLRIMIKYFLEVSLVEQRFSSLRASQLVATCAYTGQSILQEENWSNTLPQITGYDYMSLVSYVHLLLKCLENPFDHHYAIYSKYATPYFHGISRQVHDWIATNTNLMAMDGS.

The protein belongs to the cyclin family. Cyclin AB subfamily.

In terms of biological role, required for pre-meiotic DNA synthesis and S phase progression. Regulates levels of meiotic intragenic recombination. This Schizosaccharomyces pombe (strain 972 / ATCC 24843) (Fission yeast) protein is Meiosis-specific cyclin rem1 (rem1).